We begin with the raw amino-acid sequence, 317 residues long: Ribosomal protein L11 methyltransferase (317 aa).

S-adenosyl-L-methionine contacts are provided by Thr-158, Gly-179, Asp-201, and Asn-244.

Belongs to the methyltransferase superfamily. PrmA family.

It is found in the cytoplasm. The catalysed reaction is L-lysyl-[protein] + 3 S-adenosyl-L-methionine = N(6),N(6),N(6)-trimethyl-L-lysyl-[protein] + 3 S-adenosyl-L-homocysteine + 3 H(+). In terms of biological role, methylates ribosomal protein L11. This Lactococcus lactis subsp. cremoris (strain MG1363) protein is Ribosomal protein L11 methyltransferase.